A 394-amino-acid polypeptide reads, in one-letter code: Phosphoglycerate kinase (394 aa).

Residues 21 to 23 (DFN), arginine 37, 60 to 63 (HLGR), arginine 119, and arginine 152 contribute to the substrate site. Residues lysine 202, glutamate 324, and 350-353 (GGDS) contribute to the ATP site.

Belongs to the phosphoglycerate kinase family. In terms of assembly, monomer.

It localises to the cytoplasm. The catalysed reaction is (2R)-3-phosphoglycerate + ATP = (2R)-3-phospho-glyceroyl phosphate + ADP. Its pathway is carbohydrate degradation; glycolysis; pyruvate from D-glyceraldehyde 3-phosphate: step 2/5. This chain is Phosphoglycerate kinase, found in Herpetosiphon aurantiacus (strain ATCC 23779 / DSM 785 / 114-95).